The primary structure comprises 305 residues: Coenzyme PQQ synthesis protein B (305 aa).

Belongs to the PqqB family.

Its pathway is cofactor biosynthesis; pyrroloquinoline quinone biosynthesis. In terms of biological role, may be involved in the transport of PQQ or its precursor to the periplasm. The polypeptide is Coenzyme PQQ synthesis protein B (Cupriavidus necator (strain ATCC 17699 / DSM 428 / KCTC 22496 / NCIMB 10442 / H16 / Stanier 337) (Ralstonia eutropha)).